The chain runs to 440 residues: Chromosome partition protein MukF (440 aa).

The segment at 208–236 (LSETSGTLRELQDTLEAAGDKLQANLLRI) is leucine-zipper.

This sequence belongs to the MukF family. As to quaternary structure, interacts, and probably forms a ternary complex, with MukE and MukB via its C-terminal region. The complex formation is stimulated by calcium or magnesium. It is required for an interaction between MukE and MukB.

Its subcellular location is the cytoplasm. It localises to the nucleoid. In terms of biological role, involved in chromosome condensation, segregation and cell cycle progression. May participate in facilitating chromosome segregation by condensation DNA from both sides of a centrally located replisome during cell division. Not required for mini-F plasmid partitioning. Probably acts via its interaction with MukB and MukE. Overexpression results in anucleate cells. It has a calcium binding activity. This Yersinia enterocolitica serotype O:8 / biotype 1B (strain NCTC 13174 / 8081) protein is Chromosome partition protein MukF.